The following is a 344-amino-acid chain: Enoyl-[acyl-carrier-protein] reductase, mitochondrial (344 aa).

The N-terminal 14 residues, 1–14 (MLKVLSLRSALQRA), are a transit peptide targeting the mitochondrion. Tyrosine 69 (proton donor) is an active-site residue. Residues asparagine 142, 168–171 (NSAV), 191–193 (RSR), 255–258 (YGGM), 280–282 (FWM), and lysine 338 each bind NADP(+).

It belongs to the zinc-containing alcohol dehydrogenase family. Quinone oxidoreductase subfamily. In terms of assembly, homodimer.

The protein resides in the mitochondrion. The catalysed reaction is a 2,3-saturated acyl-[ACP] + NADP(+) = a (2E)-enoyl-[ACP] + NADPH + H(+). In terms of biological role, catalyzes the NADPH-dependent reduction of trans-2-enoyl thioesters in mitochondrial fatty acid synthesis (fatty acid synthesis type II). Fatty acid chain elongation in mitochondria uses acyl carrier protein (ACP) as an acyl group carrier, but the enzyme accepts both ACP and CoA thioesters as substrates in vitro. May provide the octanoyl chain used for lipoic acid biosynthesis, regulating protein lipoylation and mitochondrial respiratory activity. Involved in iron homeostasis; affecting Fe-S cluster assembly and ceramide metabolism. Required for proper morphology and bioenergetic functions of mitochondria. Required for maintenance of neurons. The sequence is that of Enoyl-[acyl-carrier-protein] reductase, mitochondrial from Caenorhabditis elegans.